Consider the following 187-residue polypeptide: LSM complex subunit LSM4 (187 aa).

The Sm domain occupies 2 to 85 (LPLYLLTNAK…IKFIKLQDNI (84 aa)). The disordered stretch occupies residues 93 to 187 (INSNNNSNSN…NSSSPQKVEF (95 aa)). Low complexity predominate over residues 112–167 (NRDSNNNRGNYNRRNNNNGNSNRRPYSQNRQYNNSNSSNINNSINSINSNNQNMNN). An Omega-N-methylarginine modification is found at arginine 119. Residues 175–187 (HHFNSSSPQKVEF) show a composition bias toward polar residues. Position 181 is a phosphoserine (serine 181).

Belongs to the snRNP Sm proteins family. As to quaternary structure, component of the heptameric LSM1-LSM7 complex that forms a seven-membered ring structure with a donut shape. The LSm subunits are arranged in the order LSM1, LSM2, LSM3, LSM6, LSM5, LSM7 and LSM4. Except for LSM1, where a C-terminal helix crosses the ring structure to form additional interactions with LSM3 and LSM6, each subunit interacts only with its two neighboring subunits. The LSM1-LSM7 complex interacts with PAT1; within the complex PAT1 has direct interactions with LSM2 and LSM3. The LSM1-LSM7 complex interacts with XRN1. Component of the heptameric LSM2-LSM8 complex that forms a seven-membered ring structure with a donut shape; an RNA strand can pass through the hole in the center of the ring structure. The LSm subunits are arranged in the order LSM8, LSM2, LSM3, LSM6, LSM5, LSM7 and LSM4. Component of the spliceosome U4/U6-U5 tri-snRNP complex composed of the U4, U6 and U5 snRNAs and at least PRP3, PRP4, PRP6, PRP8, PRP18, PRP31, PRP38, SNU13, SNU23, SNU66, SNU114, SPP381, SMB1, SMD1, SMD2, SMD3, SMX2, SMX3, LSM2, LSM3, LSM4, LSM5, LSM6, LSM7, LSM8, BRR2 and DIB1. May be found in a complex comprising LSM2-LSM7 without LSM1 or LSM8; the complex associates with pre-P RNA and snoRNA SNR5.

The protein localises to the nucleus. It is found in the cytoplasm. Its function is as follows. Component of LSm protein complexes, which are involved in RNA processing and may function in a chaperone-like manner. Component of the cytoplasmic LSM1-LSM7 complex which is involved in mRNA degradation by activating the decapping step. Together with PAT1, the LSM1-LSM7 complex binds to osmotic stress-activated mRNAs to attenuate the osmotic stress response, probably by limiting ribosome access to the mRNA and consequently translation. Component of the nuclear LSM2-LSM8 complex, which is involved in spliceosome assembly. The LSM2-LSM8 complex plays a role in the biogenesis of the spliceosomal U4/U6-U5 tri-snRNP complex by accelerating PRP24-mediated annealing of U4/U6 di-snRNA. The LSM2-LSM8 complex binds U6 snRNA terminating with a non-cyclic 3' phosphate group. LSM2-LSM8 is probably also involved in degradation of nuclear pre-mRNA by targeting them for decapping. LSM2-LSM8 could be involved in processing of pre-tRNAs, pre-rRNAs and U3 snoRNA, although involvement may be indirect. In a complex that probably contains LSM2-LSM7, but not LSM1 or LSM8, associates with the precursor of the RNA component of RNase P (pre-P RNA) and may be involved in maturing pre-P RNA; the complex also associates with snoRNA SNR5. The sequence is that of LSM complex subunit LSM4 from Saccharomyces cerevisiae (strain ATCC 204508 / S288c) (Baker's yeast).